A 445-amino-acid chain; its full sequence is Inner membrane metabolite transport protein YgcS (445 aa).

Over 1–22 (MNTSPVRMDDLPLNRFHCRIAA) the chain is Cytoplasmic. Residues 23–43 (LTFGAHLTDGYVLGVIGYAII) form a helical membrane-spanning segment. Residues 44–56 (QLTPAMQLTPFMA) lie on the Periplasmic side of the membrane. The helical transmembrane segment at 57–77 (GMIGGSALLGLFLGSLVLGWI) threads the bilayer. Residues 78–85 (SDHIGRQK) lie on the Cytoplasmic side of the membrane. A helical membrane pass occupies residues 86 to 106 (IFTFSFLLITLASFLQFFATT). Residues 107–114 (PEHLIGLR) lie on the Periplasmic side of the membrane. A helical membrane pass occupies residues 115–135 (ILIGIGLGGDYSVGHTLLAEF). At 136 to 142 (SPRRHRG) the chain is on the cytoplasmic side. Residues 143–163 (ILLGAFSVVWTVGYVLASIAG) traverse the membrane as a helical segment. Topologically, residues 164-175 (HHFISENPEAWR) are periplasmic. The helical transmembrane segment at 176-196 (WLLASAALPALLITLLRWGTP) threads the bilayer. The Cytoplasmic segment spans residues 197–253 (ESPRWLLRQGRFAEAHAIVHRYFGPHVLLGDEVVTATHKHIKTLFSSRYWRRTAFNS). Residues 254–274 (VFFVCLVIPWFVIYTWLPTIA) form a helical membrane-spanning segment. The Periplasmic segment spans residues 275–286 (QTIGLEDALTAS). The helical transmembrane segment at 287–307 (LMLNALLIVGALLGLVLTHLL) threads the bilayer. Over 308-311 (AHRK) the chain is Cytoplasmic. Residues 312–332 (FLLGSFLLLAATLVVMACLPS) form a helical membrane-spanning segment. Residues 333–337 (GSSLT) lie on the Periplasmic side of the membrane. The helical transmembrane segment at 338–358 (LLLFVLFSTTISAVSNLVGIL) threads the bilayer. The Cytoplasmic portion of the chain corresponds to 359–369 (PAESFPTDIRS). Residues 370–390 (LGVGFATAMSRLGAAVSTGLL) traverse the membrane as a helical segment. Topologically, residues 391 to 400 (PWVLAQWGMQ) are periplasmic. A helical transmembrane segment spans residues 401–421 (VTLLLLATVLLVGFVVTWLWA). Over 422–445 (PETKALPLVAAGNVGGANEHSVSV) the chain is Cytoplasmic.

Belongs to the major facilitator superfamily. Sugar transporter (TC 2.A.1.1) family.

It is found in the cell inner membrane. This is Inner membrane metabolite transport protein YgcS (ygcS) from Escherichia coli (strain K12).